The chain runs to 256 residues: Pimeloyl-[acyl-carrier protein] methyl ester esterase (256 aa).

Positions 15 to 242 constitute an AB hydrolase-1 domain; the sequence is HLVLLHGWGL…AAHAPFISHP (228 aa). Substrate contacts are provided by residues W22, 82-83, and 143-147; these read SL and FLALQ. Residue S82 is the Nucleophile of the active site. Residues D207 and H235 contribute to the active site. Residue H235 participates in substrate binding.

The protein belongs to the AB hydrolase superfamily. Carboxylesterase BioH family. In terms of assembly, monomer.

It is found in the cytoplasm. It carries out the reaction 6-carboxyhexanoyl-[ACP] methyl ester + H2O = 6-carboxyhexanoyl-[ACP] + methanol + H(+). It functions in the pathway cofactor biosynthesis; biotin biosynthesis. The physiological role of BioH is to remove the methyl group introduced by BioC when the pimeloyl moiety is complete. It allows to synthesize pimeloyl-ACP via the fatty acid synthetic pathway through the hydrolysis of the ester bonds of pimeloyl-ACP esters. The protein is Pimeloyl-[acyl-carrier protein] methyl ester esterase of Salmonella dublin (strain CT_02021853).